Reading from the N-terminus, the 426-residue chain is Serine--tRNA ligase (426 aa).

Residue 228 to 230 (TSE) coordinates L-serine. ATP-binding positions include 259 to 261 (RRE) and Val275. Glu282 contributes to the L-serine binding site. Residue 346–349 (ELTS) participates in ATP binding. Thr386 is a binding site for L-serine.

It belongs to the class-II aminoacyl-tRNA synthetase family. Type-1 seryl-tRNA synthetase subfamily. As to quaternary structure, homodimer. The tRNA molecule binds across the dimer.

It localises to the cytoplasm. It catalyses the reaction tRNA(Ser) + L-serine + ATP = L-seryl-tRNA(Ser) + AMP + diphosphate + H(+). The catalysed reaction is tRNA(Sec) + L-serine + ATP = L-seryl-tRNA(Sec) + AMP + diphosphate + H(+). It functions in the pathway aminoacyl-tRNA biosynthesis; selenocysteinyl-tRNA(Sec) biosynthesis; L-seryl-tRNA(Sec) from L-serine and tRNA(Sec): step 1/1. Catalyzes the attachment of serine to tRNA(Ser). Is also able to aminoacylate tRNA(Sec) with serine, to form the misacylated tRNA L-seryl-tRNA(Sec), which will be further converted into selenocysteinyl-tRNA(Sec). This is Serine--tRNA ligase from Arthrobacter sp. (strain FB24).